The following is a 202-amino-acid chain: Myosin regulatory light chain 10 (202 aa).

The disordered stretch occupies residues 1–21 (MGQSSLDHGVQGPVAGTGDFG). EF-hand domains follow at residues 60 to 95 (SQIQEFKEAFTIMDQNRDGFIDKEDLRDTFAALGRI), 130 to 165 (DPEETILHAFKVFDTEGKGFVKADFIKEKLMTQADR), and 166 to 201 (FSEEEVKQMFAAFPPDVCGNLDYRNLCYVITHGEEK). Ca(2+) contacts are provided by D73, N75, D77, and D84.

In terms of assembly, myosin is a hexamer of 2 heavy chains and 4 light chains. In terms of tissue distribution, specifically expressed in precursor B- and T-lymphocytes.

This is Myosin regulatory light chain 10 (Myl10) from Mus musculus (Mouse).